The following is a 330-amino-acid chain: Methionyl-tRNA formyltransferase (330 aa).

Serine 112–proline 115 provides a ligand contact to (6S)-5,6,7,8-tetrahydrofolate.

It belongs to the Fmt family.

It carries out the reaction L-methionyl-tRNA(fMet) + (6R)-10-formyltetrahydrofolate = N-formyl-L-methionyl-tRNA(fMet) + (6S)-5,6,7,8-tetrahydrofolate + H(+). In terms of biological role, attaches a formyl group to the free amino group of methionyl-tRNA(fMet). The formyl group appears to play a dual role in the initiator identity of N-formylmethionyl-tRNA by promoting its recognition by IF2 and preventing the misappropriation of this tRNA by the elongation apparatus. This chain is Methionyl-tRNA formyltransferase, found in Alcanivorax borkumensis (strain ATCC 700651 / DSM 11573 / NCIMB 13689 / SK2).